The chain runs to 326 residues: MGLEKKSALLEDLIEKCGGCAVVDGGFATQLEIHGAAINDPLWSAVSLIKDPELIKRVHMEYLEAGADVVVTSSYQATIPGFLSRGLSMEESESLLQKSVKLAVEARDRFWDKVSKTSGHSYNRALVAASIGSYGAYLADGSEYSGSYGEDVSLDKLKDFHRRRIQVLVEASPDLLAFETIPNKLEAQACVELLEEENVQIPAWICFTSVDGENAPSGESFQECLETLNKSNNICAVGINCAPPQFMDNLIRKFSKLTQKAIVVYPNSGEVWDGKAKKWLPSQCFGDAEFEMFATKWRDLGAKLIGGCCRTTPSTIKAISRDLKRR.

The 315-residue stretch at 9-323 (LLEDLIEKCG…STIKAISRDL (315 aa)) folds into the Hcy-binding domain. The Zn(2+) site is built by Cys241, Cys308, and Cys309.

The cofactor is Zn(2+). As to expression, expressed in roots, young leaves, florets and flowers. Not detected in old leaves.

It carries out the reaction S-methyl-L-methionine + L-homocysteine = 2 L-methionine + H(+). Its activity is regulated as follows. Inhibited by L-methionine. Catalyzes methyl transfer from S-methylmethionine to homocysteine. The highest preference is for DL-homocysteine &gt;&gt; DL-cysteine. Has no selenocysteine methyltransferase activity. This is Homocysteine S-methyltransferase 1 (HMT1) from Brassica oleracea var. italica (Broccoli).